The sequence spans 963 residues: Ubiquitin carboxyl-terminal hydrolase 11 (963 aa).

The disordered stretch occupies residues 64 to 93 (VTEDREPQHEELPGLDSQWRQIENGESGRE). Over residues 65–75 (TEDREPQHEEL) the composition is skewed to basic and acidic residues. Residues 76–184 (PGLDSQWRQI…GQPPIERKVI (109 aa)) form the DUSP domain. An N6-acetyllysine modification is found at Lys-245. The 622-residue stretch at 309-930 (CGLTNLGNTC…AAYVLFYQRQ (622 aa)) folds into the USP domain. Cys-318 functions as the Nucleophile in the catalytic mechanism. Disordered stretches follow at residues 644–691 (TKPN…SGVT) and 716–735 (LFTL…TSPE). At Ser-648 the chain carries Phosphoserine. Positions 649-665 (DDEDDGDEKEDDEEDKD) are enriched in acidic residues. Residues 717 to 731 (FTLQTVNSNGTSDRT) show a composition bias toward polar residues. Phosphoserine is present on Ser-733. His-888 acts as the Proton acceptor in catalysis. Positions 938–957 (SPAGSSGAPASPACSSPPSS) are enriched in low complexity. The disordered stretch occupies residues 938–963 (SPAGSSGAPASPACSSPPSSEFMDVN). Phosphoserine is present on Ser-948.

It belongs to the peptidase C19 family. Monomer. Associated component of the Polycomb group (PcG) multiprotein PRC1-like complex. Interacts with RANBP9/RANBPM. Interacts with BRCA2. Interacts with CHUK/IKKA. Interacts with NFKBIA. Interacts with SPRY3, RAE1, MYCBP2/PAM, and KCTD6. As to quaternary structure, (Microbial infection) Interacts with papilloma virus protein 16E7.

It localises to the nucleus. The protein localises to the cytoplasm. It is found in the chromosome. It catalyses the reaction Thiol-dependent hydrolysis of ester, thioester, amide, peptide and isopeptide bonds formed by the C-terminal Gly of ubiquitin (a 76-residue protein attached to proteins as an intracellular targeting signal).. Protease that can remove conjugated ubiquitin from target proteins and polyubiquitin chains. Inhibits the degradation of target proteins by the proteasome. Cleaves preferentially 'Lys-6' and 'Lys-63'-linked ubiquitin chains. Has lower activity with 'Lys-11' and 'Lys-33'-linked ubiquitin chains, and extremely low activity with 'Lys-27', 'Lys-29' and 'Lys-48'-linked ubiquitin chains (in vitro). Plays a role in the regulation of pathways leading to NF-kappa-B activation. Plays a role in the regulation of DNA repair after double-stranded DNA breaks. Acts as a chromatin regulator via its association with the Polycomb group (PcG) multiprotein PRC1-like complex; may act by deubiquitinating components of the PRC1-like complex. Promotes cell proliferation by deubiquitinating phosphorylated E2F1. The polypeptide is Ubiquitin carboxyl-terminal hydrolase 11 (USP11) (Homo sapiens (Human)).